Reading from the N-terminus, the 202-residue chain is LexA repressor (202 aa).

The H-T-H motif DNA-binding region spans 28–48 (RAEIAQELGFKSPNAAEEHLK). Residues S123 and K160 each act as for autocatalytic cleavage activity in the active site.

The protein belongs to the peptidase S24 family. As to quaternary structure, homodimer.

It carries out the reaction Hydrolysis of Ala-|-Gly bond in repressor LexA.. Its function is as follows. Represses a number of genes involved in the response to DNA damage (SOS response), including recA and lexA. In the presence of single-stranded DNA, RecA interacts with LexA causing an autocatalytic cleavage which disrupts the DNA-binding part of LexA, leading to derepression of the SOS regulon and eventually DNA repair. This is LexA repressor from Pseudomonas chlororaphis (Pseudomonas aureofaciens).